A 93-amino-acid polypeptide reads, in one-letter code: DNA-directed RNA polymerase subunit omega (93 aa).

This sequence belongs to the RNA polymerase subunit omega family. As to quaternary structure, the RNAP catalytic core consists of 2 alpha, 1 beta, 1 beta' and 1 omega subunit. When a sigma factor is associated with the core the holoenzyme is formed, which can initiate transcription.

The enzyme catalyses RNA(n) + a ribonucleoside 5'-triphosphate = RNA(n+1) + diphosphate. In terms of biological role, promotes RNA polymerase assembly. Latches the N- and C-terminal regions of the beta' subunit thereby facilitating its interaction with the beta and alpha subunits. This Acinetobacter baylyi (strain ATCC 33305 / BD413 / ADP1) protein is DNA-directed RNA polymerase subunit omega.